A 623-amino-acid chain; its full sequence is Phosphoglucomutase, chloroplastic (623 aa).

Residues 1-63 (MTSTYTRFDT…SSSSSSVVAG (63 aa)) constitute a chloroplast transit peptide. R88 and S181 together coordinate alpha-D-glucose 1,6-bisphosphate. The Phosphoserine intermediate role is filled by S181. Mg(2+) contacts are provided by S181, D346, D348, and D350. The residue at position 181 (S181) is a Phosphoserine. The alpha-D-glucose 1,6-bisphosphate site is built by D350, R351, T414, E433, S435, and K446.

It belongs to the phosphohexose mutase family. In terms of assembly, monomer. Mg(2+) is required as a cofactor. In terms of tissue distribution, expressed in flowers, siliques and germinating seeds.

The protein resides in the plastid. It is found in the chloroplast. The catalysed reaction is alpha-D-glucose 1-phosphate = alpha-D-glucose 6-phosphate. It carries out the reaction O-phospho-L-seryl-[protein] + alpha-D-glucose 1-phosphate = alpha-D-glucose 1,6-bisphosphate + L-seryl-[protein]. The enzyme catalyses alpha-D-glucose 1,6-bisphosphate + L-seryl-[protein] = O-phospho-L-seryl-[protein] + alpha-D-glucose 6-phosphate. Its activity is regulated as follows. Inhibited by the Calvin cycle intermediates fructose-1,6-bisphosphate and ribulose-1,5-bisphosphate. In terms of biological role, catalyzes the reversible isomerization of alpha-D-glucose 1-phosphate to alpha-D-glucose 6-phosphate. The mechanism proceeds via the intermediate compound alpha-D-glucose 1,6-bisphosphate. This enzyme participates in both the breakdown and synthesis of glucose. Factor that affects seed oil content. Accumulated starch in young embryos may play an important role in providing carbon resources for seed storage lipid biosynthesis in oilseed plants. Promotes gravitropic responses, negative in shoots but positive in roots, by facilitating starch granules (statoliths) formation in hypocotyls and roots columella. The polypeptide is Phosphoglucomutase, chloroplastic (Arabidopsis thaliana (Mouse-ear cress)).